Reading from the N-terminus, the 465-residue chain is GTPase Der (465 aa).

2 EngA-type G domains span residues 3–166 (FLVA…LNEY) and 184–358 (IHFS…ACAS). GTP contacts are provided by residues 9–16 (GRANVGKS), 56–60 (DTGGI), 118–121 (NKVD), 190–197 (GRPNVGKS), 237–241 (DTAGV), and 302–305 (NKWD). Residues 359 to 443 (KKITTADATR…PIVFEFKQSE (85 aa)) enclose the KH-like domain. The tract at residues 446–465 (FADRKNKRSKDEGSKSKKVK) is disordered.

This sequence belongs to the TRAFAC class TrmE-Era-EngA-EngB-Septin-like GTPase superfamily. EngA (Der) GTPase family. In terms of assembly, associates with the 50S ribosomal subunit.

GTPase that plays an essential role in the late steps of ribosome biogenesis. This chain is GTPase Der, found in Francisella tularensis subsp. tularensis (strain FSC 198).